Here is a 176-residue protein sequence, read N- to C-terminus: Peptide methionine sulfoxide reductase MsrA (176 aa).

Cys12 is a catalytic residue.

The protein belongs to the MsrA Met sulfoxide reductase family.

It catalyses the reaction L-methionyl-[protein] + [thioredoxin]-disulfide + H2O = L-methionyl-(S)-S-oxide-[protein] + [thioredoxin]-dithiol. The enzyme catalyses [thioredoxin]-disulfide + L-methionine + H2O = L-methionine (S)-S-oxide + [thioredoxin]-dithiol. Functionally, has an important function as a repair enzyme for proteins that have been inactivated by oxidation. Catalyzes the reversible oxidation-reduction of methionine sulfoxide in proteins to methionine. The sequence is that of Peptide methionine sulfoxide reductase MsrA from Thermus thermophilus (strain ATCC BAA-163 / DSM 7039 / HB27).